A 195-amino-acid polypeptide reads, in one-letter code: ATP-dependent Clp protease proteolytic subunit (195 aa).

S98 acts as the Nucleophile in catalysis. H123 is a catalytic residue.

This sequence belongs to the peptidase S14 family. As to quaternary structure, fourteen ClpP subunits assemble into 2 heptameric rings which stack back to back to give a disk-like structure with a central cavity, resembling the structure of eukaryotic proteasomes.

Its subcellular location is the cytoplasm. The enzyme catalyses Hydrolysis of proteins to small peptides in the presence of ATP and magnesium. alpha-casein is the usual test substrate. In the absence of ATP, only oligopeptides shorter than five residues are hydrolyzed (such as succinyl-Leu-Tyr-|-NHMec, and Leu-Tyr-Leu-|-Tyr-Trp, in which cleavage of the -Tyr-|-Leu- and -Tyr-|-Trp bonds also occurs).. In terms of biological role, cleaves peptides in various proteins in a process that requires ATP hydrolysis. Has a chymotrypsin-like activity. Plays a major role in the degradation of misfolded proteins. The polypeptide is ATP-dependent Clp protease proteolytic subunit (Thermodesulfovibrio yellowstonii (strain ATCC 51303 / DSM 11347 / YP87)).